The chain runs to 332 residues: Anthranilate phosphoribosyltransferase (332 aa).

Residues G79, 82 to 83 (GD), T87, 89 to 92 (NIST), 107 to 115 (KHGNRGVSS), and S119 each bind 5-phospho-alpha-D-ribose 1-diphosphate. G79 is a binding site for anthranilate. Mg(2+) is bound at residue S91. N110 is an anthranilate binding site. R165 serves as a coordination point for anthranilate. Mg(2+) is bound by residues D223 and E224.

This sequence belongs to the anthranilate phosphoribosyltransferase family. As to quaternary structure, homodimer. Mg(2+) serves as cofactor.

It catalyses the reaction N-(5-phospho-beta-D-ribosyl)anthranilate + diphosphate = 5-phospho-alpha-D-ribose 1-diphosphate + anthranilate. It participates in amino-acid biosynthesis; L-tryptophan biosynthesis; L-tryptophan from chorismate: step 2/5. Its function is as follows. Catalyzes the transfer of the phosphoribosyl group of 5-phosphorylribose-1-pyrophosphate (PRPP) to anthranilate to yield N-(5'-phosphoribosyl)-anthranilate (PRA). The protein is Anthranilate phosphoribosyltransferase of Vibrio cholerae serotype O1 (strain ATCC 39541 / Classical Ogawa 395 / O395).